Here is a 400-residue protein sequence, read N- to C-terminus: Formate-dependent phosphoribosylglycinamide formyltransferase (400 aa).

N(1)-(5-phospho-beta-D-ribosyl)glycinamide-binding positions include 22-23 (EL) and E82. ATP is bound by residues R115, K156, 161-166 (SSGKGQ), 196-199 (EGFI), and E204. Residues 120 to 309 (RLAAETLGLP…EFALHARAIL (190 aa)) form the ATP-grasp domain. Mg(2+) is bound by residues E268 and E280. N(1)-(5-phospho-beta-D-ribosyl)glycinamide-binding positions include D287, K361, and 368-369 (RR).

This sequence belongs to the PurK/PurT family. Homodimer.

It catalyses the reaction N(1)-(5-phospho-beta-D-ribosyl)glycinamide + formate + ATP = N(2)-formyl-N(1)-(5-phospho-beta-D-ribosyl)glycinamide + ADP + phosphate + H(+). Its pathway is purine metabolism; IMP biosynthesis via de novo pathway; N(2)-formyl-N(1)-(5-phospho-D-ribosyl)glycinamide from N(1)-(5-phospho-D-ribosyl)glycinamide (formate route): step 1/1. Its function is as follows. Involved in the de novo purine biosynthesis. Catalyzes the transfer of formate to 5-phospho-ribosyl-glycinamide (GAR), producing 5-phospho-ribosyl-N-formylglycinamide (FGAR). Formate is provided by PurU via hydrolysis of 10-formyl-tetrahydrofolate. The chain is Formate-dependent phosphoribosylglycinamide formyltransferase from Xanthomonas axonopodis pv. citri (strain 306).